A 589-amino-acid polypeptide reads, in one-letter code: uncharacterized protein (589 aa).

Transmembrane regions (helical) follow at residues tyrosine 90 to isoleucine 110, serine 128 to methionine 148, isoleucine 162 to valine 182, glycine 189 to leucine 209, glycine 217 to isoleucine 237, tryptophan 245 to leucine 265, phenylalanine 284 to glycine 304, alanine 311 to valine 331, valine 355 to isoleucine 375, valine 390 to isoleucine 410, tyrosine 418 to tyrosine 438, glycine 448 to isoleucine 468, alanine 483 to tyrosine 503, and isoleucine 545 to phenylalanine 565.

It belongs to the major facilitator superfamily. TCR/Tet family.

The protein localises to the membrane. This is an uncharacterized protein from Schizosaccharomyces pombe (strain 972 / ATCC 24843) (Fission yeast).